The following is a 225-amino-acid chain: E3 ubiquitin-protein ligase ATL76 (225 aa).

A helical transmembrane segment spans residues 59–79; that stretch reads LMLLSVLICGIICCLGLHYII. The RING-type; atypical zinc finger occupies 135–177; that stretch reads CVICLSDFVSGEQLRLLPKCNHGFHVRCIDKWLQHHLTCPKCR.

It belongs to the RING-type zinc finger family. ATL subfamily.

It is found in the membrane. It carries out the reaction S-ubiquitinyl-[E2 ubiquitin-conjugating enzyme]-L-cysteine + [acceptor protein]-L-lysine = [E2 ubiquitin-conjugating enzyme]-L-cysteine + N(6)-ubiquitinyl-[acceptor protein]-L-lysine.. Its pathway is protein modification; protein ubiquitination. Its function is as follows. E3 ubiquitin-protein ligase able to catalyze polyubiquitination with ubiquitin-conjugating enzyme E2 UBC8 in vitro. This Arabidopsis thaliana (Mouse-ear cress) protein is E3 ubiquitin-protein ligase ATL76 (ATL76).